We begin with the raw amino-acid sequence, 401 residues long: MTTLGTPLSPSATKVMLLGSGELGKEVLIALQRLGVETIAVDRYDNAPGQQVAHHARTIAMSDPDQLKALIEAEKPHLVVPEIEAIATPMLETLEAAGTVRVIPTARAARLTMDREGIRRLAAESLGLPTSPYKFCDSLDELQAAIDGGIGYPCVVKPVMSSSGKGQSKIDGPEGVKAAWDYAMAGGRVSHGRVIVEGFIDFDYEITLLTVRAMGASGQVETQFCAPIGHVQVSGDYVESWQPQPMHPAALETAQRIAQAVTADLGGMGLFGVELFVKGEQVWFSEVSPRPHDTGMVTMATQWQNEFELHARAILGLPVDTTLRSPGASAVIYGGVDAQGVVFDGVDQALSVPQTEVRLFGKPESFVKRRMGVALAYADDVDTARTRAKEAASRVRPRAVG.

N(1)-(5-phospho-beta-D-ribosyl)glycinamide is bound by residues 22-23 and Glu82; that span reads EL. ATP-binding positions include Arg115, Lys157, 162 to 167, 197 to 200, and Glu205; these read SSGKGQ and EGFI. The region spanning 120–315 is the ATP-grasp domain; that stretch reads RLAAESLGLP…EFELHARAIL (196 aa). 2 residues coordinate Mg(2+): Glu274 and Glu286. N(1)-(5-phospho-beta-D-ribosyl)glycinamide-binding positions include Asp293, Lys362, and 369–370; that span reads RR.

Belongs to the PurK/PurT family. As to quaternary structure, homodimer.

It catalyses the reaction N(1)-(5-phospho-beta-D-ribosyl)glycinamide + formate + ATP = N(2)-formyl-N(1)-(5-phospho-beta-D-ribosyl)glycinamide + ADP + phosphate + H(+). It functions in the pathway purine metabolism; IMP biosynthesis via de novo pathway; N(2)-formyl-N(1)-(5-phospho-D-ribosyl)glycinamide from N(1)-(5-phospho-D-ribosyl)glycinamide (formate route): step 1/1. In terms of biological role, involved in the de novo purine biosynthesis. Catalyzes the transfer of formate to 5-phospho-ribosyl-glycinamide (GAR), producing 5-phospho-ribosyl-N-formylglycinamide (FGAR). Formate is provided by PurU via hydrolysis of 10-formyl-tetrahydrofolate. The protein is Formate-dependent phosphoribosylglycinamide formyltransferase of Cupriavidus necator (strain ATCC 17699 / DSM 428 / KCTC 22496 / NCIMB 10442 / H16 / Stanier 337) (Ralstonia eutropha).